The primary structure comprises 229 residues: Cytidylate kinase (229 aa).

G12 to T20 lines the ATP pocket.

This sequence belongs to the cytidylate kinase family. Type 1 subfamily.

It localises to the cytoplasm. It carries out the reaction CMP + ATP = CDP + ADP. It catalyses the reaction dCMP + ATP = dCDP + ADP. The sequence is that of Cytidylate kinase from Stutzerimonas stutzeri (strain A1501) (Pseudomonas stutzeri).